We begin with the raw amino-acid sequence, 642 residues long: ATP-dependent rRNA helicase spb4 (642 aa).

Positions 14-42 (WDGVTPALSEWVLDAVASMGFTRMTPVQA) match the Q motif motif. Residues 45-250 (IPLFMAHKDV…RVGLRNPVKV (206 aa)) form the Helicase ATP-binding domain. 58–65 (AVTGSGKT) serves as a coordination point for ATP. A DEAD box motif is present at residues 198–201 (DEAD). One can recognise a Helicase C-terminal domain in the interval 284 to 438 (AIKHILYSLE…TLTITDADAA (155 aa)). Positions 522–625 (AYKDKQREKR…RLLRRAAKDK (104 aa)) form a coiled coil. Composition is skewed to basic and acidic residues over residues 527-536 (QREKRRKEQV) and 577-628 (AKQA…KESK). The interval 527-642 (QREKRRKEQV…DDDDEFKGFD (116 aa)) is disordered. Acidic residues predominate over residues 632 to 642 (GDDDDEFKGFD).

Belongs to the DEAD box helicase family. DDX55/SPB4 subfamily. In terms of assembly, component of pre-60S ribosomal complexes.

It localises to the nucleus. It is found in the nucleolus. The catalysed reaction is ATP + H2O = ADP + phosphate + H(+). In terms of biological role, ATP-binding RNA helicase involved in the biogenesis of 60S ribosomal subunits. Binds 90S pre-ribosomal particles and dissociates from pre-60S ribosomal particles after processing of 27SB pre-rRNA. Required for the normal formation of 18S rRNA through the processing of pre-rRNAs at sites A0, A1 and A2, and the normal formation of 25S and 5.8S rRNAs through the processing of pre-rRNAs at sites C1 and C2. This chain is ATP-dependent rRNA helicase spb4, found in Aspergillus niger (strain ATCC MYA-4892 / CBS 513.88 / FGSC A1513).